The chain runs to 512 residues: Protein maph-9 (512 aa).

Disordered stretches follow at residues 24-103, 168-386, and 481-512; these read ISRK…DDDF, DLSE…KNEK, and GNRL…RPFR. Low complexity-rich tracts occupy residues 30-39 and 78-95; these read TTTTSSGSSG and STLS…STAA. The span at 178–200 shows a compositional bias: basic and acidic residues; sequence TDHEDPSLTFRVDKELEQSESKK. Positions 230 to 239 are enriched in polar residues; sequence PQTSANLSTK. 2 stretches are compositionally biased toward basic and acidic residues: residues 260 to 302 and 310 to 386; these read KPSD…RENS and VQDH…KNEK. Residues 267–429 are a coiled coil; sequence KEWLQKKERE…QLEESEKMTR (163 aa). Polar residues predominate over residues 502 to 512; it reads PGTTTSLRPFR.

In terms of tissue distribution, expressed in amphid and phasmid ciliated neurons.

It is found in the cell projection. Its subcellular location is the cilium. The protein resides in the cytoplasm. It localises to the cytoskeleton. The protein localises to the cilium axoneme. The polypeptide is Protein maph-9 (Caenorhabditis elegans).